Reading from the N-terminus, the 155-residue chain is Peptidyl-prolyl cis-trans isomerase ppi1 (155 aa).

The region spanning 1–154 (MANVELQTSL…EPLKIIKAVA (154 aa)) is the PPIase cyclophilin-type domain.

This sequence belongs to the cyclophilin-type PPIase family. PPIL1 subfamily. Interacts with cwf13/snw1.

It carries out the reaction [protein]-peptidylproline (omega=180) = [protein]-peptidylproline (omega=0). PPIases accelerate the folding of proteins. It catalyzes the cis-trans isomerization of proline imidic peptide bonds in oligopeptides. This is Peptidyl-prolyl cis-trans isomerase ppi1 (ppi1) from Schizosaccharomyces pombe (strain 972 / ATCC 24843) (Fission yeast).